The following is a 1793-amino-acid chain: Protein TIC 214 (1793 aa).

6 helical membrane passes run 11-31, 64-84, 90-112, 129-149, 172-192, and 222-242; these read LVSLCLKIINSVIVVGLYYGF, FITGQLVMFISIYYAPLHIAL, ITVITLPYLLLYFLGNNQKNFLN, IFFQNLFFQLLNPFFLPSSIL, VGWLIGHVFFMKWIGLMLVWI, and IFLIFFFITCLYYLGRIPPIY. The tract at residues 1504 to 1524 is disordered; the sequence is DIEEDYGESDSKKGGKDKNKK.

This sequence belongs to the TIC214 family. Part of the Tic complex.

It is found in the plastid. The protein resides in the chloroplast inner membrane. Functionally, involved in protein precursor import into chloroplasts. May be part of an intermediate translocation complex acting as a protein-conducting channel at the inner envelope. The chain is Protein TIC 214 from Lotus japonicus (Lotus corniculatus var. japonicus).